Here is a 241-residue protein sequence, read N- to C-terminus: Adenosylcobinamide-GDP ribazoletransferase (241 aa).

5 consecutive transmembrane segments (helical) span residues 24–44 (IVFF…SIFY), 48–68 (FINQ…IYGF), 103–123 (VVTF…FNSI), 175–195 (VIIL…FSLI), and 218–238 (IIGF…LISF).

The protein belongs to the CobS family. Mg(2+) is required as a cofactor.

The protein resides in the cell membrane. The enzyme catalyses alpha-ribazole + adenosylcob(III)inamide-GDP = adenosylcob(III)alamin + GMP + H(+). The catalysed reaction is alpha-ribazole 5'-phosphate + adenosylcob(III)inamide-GDP = adenosylcob(III)alamin 5'-phosphate + GMP + H(+). It participates in cofactor biosynthesis; adenosylcobalamin biosynthesis; adenosylcobalamin from cob(II)yrinate a,c-diamide: step 7/7. Joins adenosylcobinamide-GDP and alpha-ribazole to generate adenosylcobalamin (Ado-cobalamin). Also synthesizes adenosylcobalamin 5'-phosphate from adenosylcobinamide-GDP and alpha-ribazole 5'-phosphate. In Picrophilus torridus (strain ATCC 700027 / DSM 9790 / JCM 10055 / NBRC 100828 / KAW 2/3), this protein is Adenosylcobinamide-GDP ribazoletransferase.